The primary structure comprises 94 residues: Large ribosomal subunit protein uL23 (94 aa).

The protein belongs to the universal ribosomal protein uL23 family. In terms of assembly, part of the 50S ribosomal subunit. Contacts protein L29, and trigger factor when it is bound to the ribosome.

One of the early assembly proteins it binds 23S rRNA. One of the proteins that surrounds the polypeptide exit tunnel on the outside of the ribosome. Forms the main docking site for trigger factor binding to the ribosome. The chain is Large ribosomal subunit protein uL23 from Exiguobacterium sibiricum (strain DSM 17290 / CCUG 55495 / CIP 109462 / JCM 13490 / 255-15).